A 179-amino-acid polypeptide reads, in one-letter code: Large ribosomal subunit protein uL5 (179 aa).

This sequence belongs to the universal ribosomal protein uL5 family. Part of the 50S ribosomal subunit; part of the 5S rRNA/L5/L18/L25 subcomplex. Contacts the 5S rRNA and the P site tRNA. Forms a bridge to the 30S subunit in the 70S ribosome.

In terms of biological role, this is one of the proteins that bind and probably mediate the attachment of the 5S RNA into the large ribosomal subunit, where it forms part of the central protuberance. In the 70S ribosome it contacts protein S13 of the 30S subunit (bridge B1b), connecting the 2 subunits; this bridge is implicated in subunit movement. Contacts the P site tRNA; the 5S rRNA and some of its associated proteins might help stabilize positioning of ribosome-bound tRNAs. The chain is Large ribosomal subunit protein uL5 from Acidovorax ebreus (strain TPSY) (Diaphorobacter sp. (strain TPSY)).